Consider the following 301-residue polypeptide: Glycosyltransferase GlyG (301 aa).

It belongs to the glycosyltransferase 2 family.

It participates in protein modification; protein glycosylation. Involved in the polymorphic O-glycosylation of the serine-rich repeat protein PsrP. Catalyzes the third step in glycosylation PsrP in this bacteria. Transfers glucose from UDP-glucose to the terminal glucose moiety of already-glycosylated PsrP (using truncated substrates with PsrP SSR1-GlcNAc-Glc). Has a marked preference for PsrP substrate that has already been modified by GlcNAc and glucose. In vitro has hydrolytic activity against UDP-glucose and to a lesser extent against UDP-galactose. In terms of biological role, also catalyzes the fourth step in glycosylation of the serine-rich repeat protein PsrP in this bacteria. Can transfer the sugar from UDP-glucose (and much less well from UDP-galactose) to the terminal sugar moiety of PsrP-GlcNAc-Glc-Gal or of PsrP-GlcNAc-Glc-Glc. The polypeptide is Glycosyltransferase GlyG (Streptococcus pneumoniae serotype 4 (strain ATCC BAA-334 / TIGR4)).